Reading from the N-terminus, the 118-residue chain is Eukaryotic translation initiation factor 4E-binding protein 1 (118 aa).

An N-acetylserine modification is found at S2. Positions 27-48 (VQLPPGDYSTTPGGTLFSTTPG) are disordered. Residues 34–48 (YSTTPGGTLFSTTPG) show a composition bias toward polar residues. Residue T37 is modified to Phosphothreonine; by MTOR. T41 is subject to Phosphothreonine. The residue at position 44 (S44) is a Phosphoserine. Position 46 is a phosphothreonine; by MTOR (T46). T50 bears the Phosphothreonine mark. Y54 is subject to Phosphotyrosine. A YXXXXLphi motif motif is present at residues 54–60 (YDRKFLM). A Glycyl lysine isopeptide (Lys-Gly) (interchain with G-Cter in ubiquitin) cross-link involves residue K57. The disordered stretch occupies residues 64–118 (NSPVTKTPPRDLPTIPGVTSPTGDEPPTEARQNHLRSSPEDKPAGGEESQFEMDI). Residue S65 is modified to Phosphoserine; by DYRK2, MAPK1, MAPK3 and MTOR. The residue at position 70 (T70) is a Phosphothreonine; by MTOR. At T77 the chain carries Phosphothreonine. A phosphoserine mark is found at S83 and S100. At S101 the chain carries Phosphoserine; by DYRK2. Position 112 is a phosphoserine (S112). Residues 114-118 (FEMDI) carry the TOS motif motif.

It belongs to the eIF4E-binding protein family. In terms of assembly, hypophosphorylated EIF4EBP1 competes with EIF4G1/EIF4G3 to interact with EIF4E; insulin stimulated MAP-kinase (MAPK1 and MAPK3) or mTORC1 phosphorylation of EIF4EBP1 causes dissociation of the complex allowing EIF4G1/EIF4G3 to bind and consequent initiation of translation. Interacts (via TOS motif) with RPTOR; promoting phosphorylation by mTORC1. Post-translationally, phosphorylated on serine and threonine residues in response to insulin, EGF and PDGF. Phosphorylation at Thr-37, Thr-46, Ser-65 and Thr-70, corresponding to the hyperphosphorylated form, is regulated by mTORC1 and abolishes binding to EIF4E. In terms of processing, ubiquitinated: when eIF4E levels are low, hypophosphorylated form is ubiquitinated by the BCR(KLHL25) complex, leading to its degradation and serving as a homeostatic mechanism to maintain translation and prevent eIF4E inhibition when eIF4E levels are low. Not ubiquitinated when hyperphosphorylated (at Thr-37, Thr-46, Ser-65 and Thr-70) or associated with eIF4E.

The protein localises to the cytoplasm. It is found in the nucleus. Its function is as follows. Repressor of translation initiation that regulates EIF4E activity by preventing its assembly into the eIF4F complex: hypophosphorylated form competes with EIF4G1/EIF4G3 and strongly binds to EIF4E, leading to repress translation. In contrast, hyperphosphorylated form dissociates from EIF4E, allowing interaction between EIF4G1/EIF4G3 and EIF4E, leading to initiation of translation. Mediates the regulation of protein translation by hormones, growth factors and other stimuli that signal through the MAP kinase and mTORC1 pathways. This is Eukaryotic translation initiation factor 4E-binding protein 1 (EIF4EBP1) from Bos taurus (Bovine).